We begin with the raw amino-acid sequence, 398 residues long: Succinate--CoA ligase [ADP-forming] subunit beta (398 aa).

An ATP-grasp domain is found at 9 to 237 (RDLFETHGVP…AGGLDILELK (229 aa)). ATP-binding positions include Lys-45, 52–54 (GRG), Ala-94, and Glu-99. Positions 191 and 205 each coordinate Mg(2+). Residues Asn-257 and 319-321 (GIT) each bind substrate.

The protein belongs to the succinate/malate CoA ligase beta subunit family. As to quaternary structure, heterotetramer of two alpha and two beta subunits. Requires Mg(2+) as cofactor.

The catalysed reaction is succinate + ATP + CoA = succinyl-CoA + ADP + phosphate. It carries out the reaction GTP + succinate + CoA = succinyl-CoA + GDP + phosphate. Its pathway is carbohydrate metabolism; tricarboxylic acid cycle; succinate from succinyl-CoA (ligase route): step 1/1. Succinyl-CoA synthetase functions in the citric acid cycle (TCA), coupling the hydrolysis of succinyl-CoA to the synthesis of either ATP or GTP and thus represents the only step of substrate-level phosphorylation in the TCA. The beta subunit provides nucleotide specificity of the enzyme and binds the substrate succinate, while the binding sites for coenzyme A and phosphate are found in the alpha subunit. The sequence is that of Succinate--CoA ligase [ADP-forming] subunit beta from Corynebacterium glutamicum (strain ATCC 13032 / DSM 20300 / JCM 1318 / BCRC 11384 / CCUG 27702 / LMG 3730 / NBRC 12168 / NCIMB 10025 / NRRL B-2784 / 534).